Reading from the N-terminus, the 541-residue chain is Pheromone B beta 1 receptor (541 aa).

Residues 1–3 (MHP) lie on the Extracellular side of the membrane. The chain crosses the membrane as a helical span at residues 4-24 (EFAPVAFLSAASLALPLPWHW). Topologically, residues 25–33 (RAGNVATLS) are cytoplasmic. The helical transmembrane segment at 34 to 54 (IIAWLFIMNMIYGINAVIWAG) threads the bilayer. At 55–69 (SARITAVVYCDITTK) the chain is on the extracellular side. A helical transmembrane segment spans residues 70–90 (LTIGGNFALPAACLCLCIHLE). Topologically, residues 91-109 (RVASVRAAQTTAADKRRRT) are cytoplasmic. Residues 110 to 130 (IFELAMCWLLPIIFMALHYVV) form a helical membrane-spanning segment. Over 131–150 (QGHRFDIVEDFGCRPATYYS) the chain is Extracellular. Residues 151-171 (IPAIFIVWVPPLTMAAASLVY) traverse the membrane as a helical segment. Over 172–205 (ASLAIRHFMHRRLSFAMHLQARSSALTTSRYLRL) the chain is Cytoplasmic. Residues 206–226 (ILMAIVQLVWLVVTTAYTLWF) form a helical membrane-spanning segment. Over 227-264 (SSMTLNLRPWTTWADVHSNFGRIQTWPAIITPAVILRG) the chain is Extracellular. A helical membrane pass occupies residues 265 to 285 (ACTLWWMVPASTWIFVAFFAF). The Cytoplasmic segment spans residues 286 to 541 (GNDAVEEYKR…IASVFPGGRR (256 aa)). Disordered stretches follow at residues 364-393 (TTST…PLDS) and 414-541 (YTIE…GGRR). Positions 372 to 385 (MPPPYSLPPPPPPQ) are enriched in pro residues. Over residues 420 to 429 (PETPSTSSST) the composition is skewed to low complexity. Pro residues-rich tracts occupy residues 467-478 (IPAPPSLPPPTH) and 493-502 (SRPPAFPPYP).

Belongs to the G-protein coupled receptor 4 family.

Its subcellular location is the membrane. In terms of biological role, receptor for the BBP1 pheromone, a prenylated mating factor. The sequence is that of Pheromone B beta 1 receptor (BBR1) from Schizophyllum commune (Split gill fungus).